Here is a 621-residue protein sequence, read N- to C-terminus: UvrABC system protein C (621 aa).

One can recognise a GIY-YIG domain in the interval 20 to 98; sequence MAPGVYCMYA…IKSLAPRYNV (79 aa). The UVR domain maps to 207 to 242; that stretch reads DLLAEELIQAMQVASEHLEFEQAARLRDLLTSLRSM.

The protein belongs to the UvrC family. In terms of assembly, interacts with UvrB in an incision complex.

It localises to the cytoplasm. Its function is as follows. The UvrABC repair system catalyzes the recognition and processing of DNA lesions. UvrC both incises the 5' and 3' sides of the lesion. The N-terminal half is responsible for the 3' incision and the C-terminal half is responsible for the 5' incision. The polypeptide is UvrABC system protein C (Xylella fastidiosa (strain 9a5c)).